The primary structure comprises 47 residues: Wound-induced basic protein (47 aa).

A disordered region spans residues 1 to 47 (MIYDVNSPLFRSFLSQKGGSSDKRKTEEQKPKEHRPKASENKPIMTE). Positions 20–40 (SSDKRKTEEQKPKEHRPKASE) are enriched in basic and acidic residues.

As to expression, abundant in radicals and epicotyls of seedlings and higher in the roots than in stems and leaves of mature plants.

The polypeptide is Wound-induced basic protein (PR4) (Phaseolus vulgaris (Kidney bean)).